A 306-amino-acid polypeptide reads, in one-letter code: 17-beta-hydroxysteroid dehydrogenase type 3 (306 aa).

An NADP(+)-binding site is contributed by Gly-44 to Leu-73. Ser-181 contacts substrate. The active-site Proton acceptor is the Tyr-194.

It belongs to the short-chain dehydrogenases/reductases (SDR) family. 17-beta-HSD 3 subfamily.

The protein localises to the endoplasmic reticulum. It catalyses the reaction a 17beta-hydroxy steroid + NADP(+) = a 17-oxo steroid + NADPH + H(+). It carries out the reaction testosterone + NADP(+) = androst-4-ene-3,17-dione + NADPH + H(+). The enzyme catalyses 17beta-estradiol + NADP(+) = estrone + NADPH + H(+). The catalysed reaction is 3beta-hydroxyandrost-5-en-17-one + NADPH + H(+) = androst-5-en-3beta,17beta-diol + NADP(+). It catalyses the reaction 17beta-hydroxy-5alpha-androstan-3-one + NADP(+) = 5alpha-androstan-3,17-dione + NADPH + H(+). It carries out the reaction androsterone + NADPH + H(+) = 5alpha-androstane-3alpha,17beta-diol + NADP(+). The enzyme catalyses 3beta-hydroxy-5alpha-androstan-17-one + NADPH + H(+) = 5alpha-androstane-3beta,17beta-diol + NADP(+). The catalysed reaction is androst-4-ene-3,11,17-trione + NADPH + H(+) = 17beta-hydroxyandrost-4-ene-3,11-dione + NADP(+). It catalyses the reaction 11beta-hydroxyandrost-4-ene-3,17-dione + NADPH + H(+) = 11beta,17beta-dihydroxyandrost-4-ene-3-one + NADP(+). The protein operates within hormone biosynthesis; testosterone biosynthesis. Its pathway is steroid metabolism. Its function is as follows. Catalyzes the conversion of 17-oxosteroids to 17beta-hydroxysteroids. Favors the reduction of androstenedione to testosterone. Testosterone is the key androgen driving male development and function. Uses NADPH while the two other EDH17B enzymes use NADH. Androgens such as epiandrosterone, dehydroepiandrosterone, androsterone and androstanedione are accepted as substrates and reduced at C-17. Can reduce 11-ketoandrostenedione as well as 11beta-hydroxyandrostenedione at C-17 to the respective testosterone forms. Plays a role in the rate-limiting-step for the maximum level of testosterone production by the testis but does not affect basal testosterone production. This Rattus norvegicus (Rat) protein is 17-beta-hydroxysteroid dehydrogenase type 3.